Consider the following 156-residue polypeptide: NAD(P)H-quinone oxidoreductase subunit N (156 aa).

Belongs to the complex I NdhN subunit family. NDH-1 can be composed of about 15 different subunits; different subcomplexes with different compositions have been identified which probably have different functions.

Its subcellular location is the cellular thylakoid membrane. The catalysed reaction is a plastoquinone + NADH + (n+1) H(+)(in) = a plastoquinol + NAD(+) + n H(+)(out). It catalyses the reaction a plastoquinone + NADPH + (n+1) H(+)(in) = a plastoquinol + NADP(+) + n H(+)(out). NDH-1 shuttles electrons from an unknown electron donor, via FMN and iron-sulfur (Fe-S) centers, to quinones in the respiratory and/or the photosynthetic chain. The immediate electron acceptor for the enzyme in this species is believed to be plastoquinone. Couples the redox reaction to proton translocation, and thus conserves the redox energy in a proton gradient. Cyanobacterial NDH-1 also plays a role in inorganic carbon-concentration. This Prochlorococcus marinus (strain MIT 9515) protein is NAD(P)H-quinone oxidoreductase subunit N.